We begin with the raw amino-acid sequence, 196 residues long: Small ribosomal subunit protein uS4c (196 aa).

Residues 16 to 36 (GTLPGLTSKRPKSGSDLKTQL) form a disordered region. In terms of domain architecture, S4 RNA-binding spans 89–150 (MRLDNILFRL…KQRSKALIQN (62 aa)).

The protein belongs to the universal ribosomal protein uS4 family. In terms of assembly, part of the 30S ribosomal subunit. Contacts protein S5. The interaction surface between S4 and S5 is involved in control of translational fidelity.

The protein localises to the plastid. It is found in the chloroplast. One of the primary rRNA binding proteins, it binds directly to 16S rRNA where it nucleates assembly of the body of the 30S subunit. Functionally, with S5 and S12 plays an important role in translational accuracy. The sequence is that of Small ribosomal subunit protein uS4c (rps4) from Rhapis humilis (Slender lady palm).